A 63-amino-acid chain; its full sequence is Large ribosomal subunit protein uL29 (63 aa).

Belongs to the universal ribosomal protein uL29 family.

This is Large ribosomal subunit protein uL29 from Enterobacter sp. (strain 638).